A 474-amino-acid polypeptide reads, in one-letter code: Gamma-aminobutyric acid receptor subunit beta-2 (474 aa).

Residues 1–25 (MWRVRKRGYFGIWSFPLIIAAVCAQ) form the signal peptide. Topologically, residues 26 to 244 (SVNDPSNMSL…SFKLKRNIGY (219 aa)) are extracellular. Asparagine 32 and asparagine 104 each carry an N-linked (GlcNAc...) asparagine glycan. Residue tyrosine 121 participates in histamine binding. Residues cysteine 160 and cysteine 174 are joined by a disulfide bond. The N-linked (GlcNAc...) asparagine glycan is linked to asparagine 173. Residues 180–181 (SY) and threonine 226 each bind histamine. 4-aminobutanoate contacts are provided by tyrosine 181 and threonine 226. The next 3 helical transmembrane spans lie at 245 to 266 (FILQ…SFWI), 270 to 292 (ASAA…NTHL), and 304 to 326 (AIDM…YALV). Over 327–451 (NYIFFGRGPQ…DLTDVNAIDR (125 aa)) the chain is Cytoplasmic. Tyrosine 403 bears the Phosphotyrosine mark. A helical transmembrane segment spans residues 452-473 (WSRIFFPVVFSFFNIVYWLYYV).

It belongs to the ligand-gated ion channel (TC 1.A.9) family. Gamma-aminobutyric acid receptor (TC 1.A.9.5) subfamily. GABRB2 sub-subfamily. As to quaternary structure, heteropentamer, formed by a combination of alpha (GABRA1-6), beta (GABRB1-3), gamma (GABRG1-3), delta (GABRD), epsilon (GABRE), rho (GABRR1-3), pi (GABRP) and theta (GABRQ) chains, each subunit exhibiting distinct physiological and pharmacological properties. Interacts with UBQLN1. May interact with KIF21B. Identified in a complex of 720 kDa composed of LHFPL4, NLGN2, GABRA1, GABRB2, GABRG2 and GABRB3. Glycosylated. As to expression, expressed in brain (at protein level), in cerebellar granule cells. Expressed in lungs, in alveolar epithelium.

It is found in the postsynaptic cell membrane. It localises to the cell membrane. The protein localises to the cytoplasmic vesicle membrane. The enzyme catalyses chloride(in) = chloride(out). Allosterically activated by benzodiazepines and the anesthetic etomidate. Inhibited by the antagonist bicuculline. Potentiated by histamine. Functionally, beta subunit of the heteropentameric ligand-gated chloride channel gated by gamma-aminobutyric acid (GABA), a major inhibitory neurotransmitter in the brain. GABA-gated chloride channels, also named GABA(A) receptors (GABAAR), consist of five subunits arranged around a central pore and contain GABA active binding site(s) located at the alpha and beta subunit interface(s). When activated by GABA, GABAARs selectively allow the flow of chloride anions across the cell membrane down their electrochemical gradient. Chloride influx into the postsynaptic neuron following GABAAR opening decreases the neuron ability to generate a new action potential, thereby reducing nerve transmission. GABAARs containing alpha-1 and beta-2 or -3 subunits exhibit synaptogenic activity; the gamma-2 subunit being necessary but not sufficient to induce rapid synaptic contacts formation. Extrasynaptic beta-2 receptors contribute to the tonic GABAergic inhibition. Beta-containing GABAARs can simultaneously bind GABA and histamine where histamine binds at the interface of two neighboring beta subunits, which may be involved in the regulation of sleep and wakefulness. The protein is Gamma-aminobutyric acid receptor subunit beta-2 of Rattus norvegicus (Rat).